A 558-amino-acid chain; its full sequence is Atlastin-1 (558 aa).

Residues 1–27 form a disordered region; it reads MAKNRRDRNSWGGFSEKTYEWSSEEEE. The tract at residues 1–34 is N-terminal hypervariable region (HVR); that stretch reads MAKNRRDRNSWGGFSEKTYEWSSEEEEPVKKAGP. Residues 1-449 are Cytoplasmic-facing; sequence MAKNRRDRNS…NIFHAARTPA (449 aa). Serine 10, serine 22, and serine 23 each carry phosphoserine. The region spanning 64–309 is the GB1/RHD3-type G domain; sequence DKEVVAVSVA…LIPWLLSPES (246 aa). Residues arginine 77, lysine 78, glycine 79, lysine 80, serine 81, phenylalanine 82, glutamine 148, arginine 217, aspartate 218, valine 276, and asparagine 279 each contribute to the GDP site. GTP contacts are provided by arginine 77, lysine 78, glycine 79, lysine 80, serine 81, and phenylalanine 82. Serine 81 lines the Mg(2+) pocket. Arginine 217, aspartate 218, and valine 276 together coordinate GTP. Residues 347-438 form a 3HB (three-helix bundle) domain region; it reads MLQATAEANN…YIQYIKHNDS (92 aa). An N6-acetyllysine modification is found at lysine 395. A coiled-coil region spans residues 412 to 439; it reads EFSRRYLQQLESEIDELYIQYIKHNDSK. The segment at 439-447 is linker; sequence KNIFHAART. A helical membrane pass occupies residues 450-470; the sequence is TLFVVIFITYVIAGVTGFIGL. Aspartate 471 is a topological domain (lumenal). A helical membrane pass occupies residues 472–492; that stretch reads IIASLCNMIMGLTLITLCTWA. The Cytoplasmic portion of the chain corresponds to 493–558; that stretch reads YIRYSGEYRE…STEQSEKKKM (66 aa). An autoinhibitory domain region spans residues 521 to 558; sequence NEALYKLYSAAATHRHLYHQAFPTPKSESTEQSEKKKM.

The protein belongs to the TRAFAC class dynamin-like GTPase superfamily. GB1/RHD3 GTPase family. GB1 subfamily. In terms of assembly, monomeric and homodimeric. The homodimer, transiently formed by two molecules on opposing membranes, is the active form mediating ER membrane fusion. Interacts with REEP1, REEP5, RTN3 and RTN4 (via the transmembrane region); these proteins are involved in endoplasmic reticulum tubular network organization. Interacts with ZFYVE27; both proteins are involved in endoplasmic reticulum tubular network organization. Interacts with ARL6IP1; both proteins are involved in endoplasmic reticulum tubular network organization. Interacts with SPAST; the interaction is direct, could recruit SPAST to Golgi membranes. Interacts (via N-terminal region) with MAP4K4 (via CNH regulatory domain). May interact with TMED2. Interacts with CPT1C. Phosphorylated. Phosphorylation, by different kinases, of the N-terminal hypervariable region (HVR) regulates the ATL1-mediated membrane tethering step.

It localises to the endoplasmic reticulum membrane. Its subcellular location is the golgi apparatus membrane. It is found in the cell projection. The protein resides in the axon. The catalysed reaction is GTP + H2O = GDP + phosphate + H(+). Its function is as follows. Atlastin-1 (ATL1) is a membrane-anchored GTPase that mediates the GTP-dependent fusion of endoplasmic reticulum (ER) membranes, maintaining the continuous ER network. It facilitates the formation of three-way junctions where ER tubules intersect. Two atlastin-1 on neighboring ER tubules bind GTP and form loose homodimers through the GB1/RHD3-type G domains and 3HB regions. Upon GTP hydrolysis, the 3HB regions tighten, pulling the membranes together to drive their fusion. After fusion, the homodimer disassembles upon release of inorganic phosphate (Pi). Subsequently, GDP dissociates, resetting the monomers to a conformation ready for a new fusion cycle. May also regulate more or less directly Golgi biogenesis. Indirectly regulates axonal development. The protein is Atlastin-1 of Macaca fascicularis (Crab-eating macaque).